Here is a 142-residue protein sequence, read N- to C-terminus: Hemoglobin subunit alpha-1 (142 aa).

Positions 2–142 (LLSADDKKHI…VSTVLTSKYR (141 aa)) constitute a Globin domain. H59 serves as a coordination point for O2. H88 serves as a coordination point for heme b.

The protein belongs to the globin family. In terms of assembly, heterotetramer of two alpha chains and two beta chains. Red blood cells.

Functionally, involved in oxygen transport from the lung to the various peripheral tissues. This chain is Hemoglobin subunit alpha-1 (hba1), found in Xenopus laevis (African clawed frog).